Reading from the N-terminus, the 190-residue chain is Peptidyl-tRNA hydrolase (190 aa).

A tRNA-binding site is contributed by tyrosine 14. Histidine 19 functions as the Proton acceptor in the catalytic mechanism. The tRNA site is built by tyrosine 64, asparagine 66, and asparagine 113.

This sequence belongs to the PTH family. In terms of assembly, monomer.

It localises to the cytoplasm. It catalyses the reaction an N-acyl-L-alpha-aminoacyl-tRNA + H2O = an N-acyl-L-amino acid + a tRNA + H(+). Functionally, hydrolyzes ribosome-free peptidyl-tRNAs (with 1 or more amino acids incorporated), which drop off the ribosome during protein synthesis, or as a result of ribosome stalling. In terms of biological role, catalyzes the release of premature peptidyl moieties from peptidyl-tRNA molecules trapped in stalled 50S ribosomal subunits, and thus maintains levels of free tRNAs and 50S ribosomes. This chain is Peptidyl-tRNA hydrolase, found in Gemmatimonas aurantiaca (strain DSM 14586 / JCM 11422 / NBRC 100505 / T-27).